The primary structure comprises 742 residues: 5-methyltetrahydropteroyltriglutamate--homocysteine methyltransferase (742 aa).

5-methyltetrahydropteroyltri-L-glutamate contacts are provided by residues 18–21 (REWK) and K112. L-homocysteine is bound by residues 420 to 422 (IGS) and E473. Residues 420–422 (IGS) and E473 contribute to the L-methionine site. W550 contacts 5-methyltetrahydropteroyltri-L-glutamate. D588 is an L-homocysteine binding site. D588 is a binding site for L-methionine. E594 lines the 5-methyltetrahydropteroyltri-L-glutamate pocket. Zn(2+)-binding residues include H630, C632, and E654. The active-site Proton donor is the H683. A Zn(2+)-binding site is contributed by C715.

Belongs to the vitamin-B12 independent methionine synthase family. Requires Zn(2+) as cofactor.

It carries out the reaction 5-methyltetrahydropteroyltri-L-glutamate + L-homocysteine = tetrahydropteroyltri-L-glutamate + L-methionine. Its pathway is amino-acid biosynthesis; L-methionine biosynthesis via de novo pathway; L-methionine from L-homocysteine (MetE route): step 1/1. Catalyzes the transfer of a methyl group from 5-methyltetrahydrofolate to homocysteine resulting in methionine formation. This chain is 5-methyltetrahydropteroyltriglutamate--homocysteine methyltransferase, found in Staphylococcus aureus (strain MRSA252).